Here is a 228-residue protein sequence, read N- to C-terminus: 7-cyano-7-deazaguanine synthase (228 aa).

Residue 16-26 (FSGGQDSTTCL) coordinates ATP. Zn(2+) contacts are provided by cysteine 193, cysteine 201, cysteine 204, and cysteine 207.

The protein belongs to the QueC family. It depends on Zn(2+) as a cofactor.

It catalyses the reaction 7-carboxy-7-deazaguanine + NH4(+) + ATP = 7-cyano-7-deazaguanine + ADP + phosphate + H2O + H(+). Its pathway is purine metabolism; 7-cyano-7-deazaguanine biosynthesis. Catalyzes the ATP-dependent conversion of 7-carboxy-7-deazaguanine (CDG) to 7-cyano-7-deazaguanine (preQ(0)). This Pasteurella multocida (strain Pm70) protein is 7-cyano-7-deazaguanine synthase.